A 203-amino-acid chain; its full sequence is Pyrrolidone-carboxylate peptidase 1 (203 aa).

Catalysis depends on residues Glu78, Cys141, and His165.

It belongs to the peptidase C15 family. As to quaternary structure, homotetramer.

The protein localises to the cytoplasm. The enzyme catalyses Release of an N-terminal pyroglutamyl group from a polypeptide, the second amino acid generally not being Pro.. Functionally, removes 5-oxoproline from various penultimate amino acid residues except L-proline. The polypeptide is Pyrrolidone-carboxylate peptidase 1 (Caldanaerobacter subterraneus subsp. tengcongensis (strain DSM 15242 / JCM 11007 / NBRC 100824 / MB4) (Thermoanaerobacter tengcongensis)).